The chain runs to 101 residues: UPF0473 protein LAF_0524 (101 aa).

This sequence belongs to the UPF0473 family.

This is UPF0473 protein LAF_0524 from Limosilactobacillus fermentum (strain NBRC 3956 / LMG 18251) (Lactobacillus fermentum).